A 340-amino-acid polypeptide reads, in one-letter code: Heat-inducible transcription repressor HrcA (340 aa).

The protein belongs to the HrcA family.

Functionally, negative regulator of class I heat shock genes (grpE-dnaK-dnaJ and groELS operons). Prevents heat-shock induction of these operons. This chain is Heat-inducible transcription repressor HrcA, found in Clavibacter michiganensis subsp. michiganensis (strain NCPPB 382).